Here is a 217-residue protein sequence, read N- to C-terminus: DNA repair protein homolog YobH (217 aa).

The UmuC domain maps to 1 to 68; that stretch reads MAKAIQSSMW…RPLSKMWGIG (68 aa).

This sequence belongs to the DNA polymerase type-Y family.

The protein is DNA repair protein homolog YobH (yobH) of Bacillus subtilis (strain 168).